The chain runs to 228 residues: Urease accessory protein UreF (228 aa).

This sequence belongs to the UreF family. In terms of assembly, ureD, UreF and UreG form a complex that acts as a GTP-hydrolysis-dependent molecular chaperone, activating the urease apoprotein by helping to assemble the nickel containing metallocenter of UreC. The UreE protein probably delivers the nickel.

The protein localises to the cytoplasm. In terms of biological role, required for maturation of urease via the functional incorporation of the urease nickel metallocenter. In Photorhabdus laumondii subsp. laumondii (strain DSM 15139 / CIP 105565 / TT01) (Photorhabdus luminescens subsp. laumondii), this protein is Urease accessory protein UreF.